A 383-amino-acid chain; its full sequence is Neuropeptide Y receptor type 1 (383 aa).

Over Met1–Ala44 the chain is Extracellular. N-linked (GlcNAc...) asparagine glycosylation is found at Asn2, Asn11, and Asn17. A helical membrane pass occupies residues Leu45–Ile65. Residues Leu66–Asn76 are Cytoplasmic-facing. A helical membrane pass occupies residues Ile77 to Thr97. Residues Phe98–Asn116 are Extracellular-facing. Cysteines 113 and 198 form a disulfide. The chain crosses the membrane as a helical span at residues Pro117 to Glu137. The Cytoplasmic segment spans residues Arg138–His154. The helical transmembrane segment at Ala155–Ile175 threads the bilayer. Residues Tyr176–Tyr211 lie on the Extracellular side of the membrane. A helical membrane pass occupies residues Thr212–Phe232. Topologically, residues Lys233 to Arg260 are cytoplasmic. The helical transmembrane segment at Ile261 to Ile281 threads the bilayer. Topologically, residues Phe282 to Asn299 are extracellular. A helical membrane pass occupies residues Leu300–Tyr320. Topologically, residues Gly321–Ile383 are cytoplasmic. The S-palmitoyl cysteine moiety is linked to residue Cys338. Ser368 bears the Phosphoserine mark.

Belongs to the G-protein coupled receptor 1 family.

It is found in the cell membrane. In terms of biological role, receptor for neuropeptide Y and peptide YY. This is Neuropeptide Y receptor type 1 (NPY1R) from Sus scrofa (Pig).